The chain runs to 255 residues: Triosephosphate isomerase (255 aa).

Residue 9-11 (NWK) participates in substrate binding. The active-site Electrophile is the histidine 96. Glutamate 168 acts as the Proton acceptor in catalysis. Glycine 174 and serine 213 together coordinate substrate.

It belongs to the triosephosphate isomerase family. In terms of assembly, homodimer.

The protein resides in the cytoplasm. The catalysed reaction is D-glyceraldehyde 3-phosphate = dihydroxyacetone phosphate. It participates in carbohydrate biosynthesis; gluconeogenesis. The protein operates within carbohydrate degradation; glycolysis; D-glyceraldehyde 3-phosphate from glycerone phosphate: step 1/1. Functionally, involved in the gluconeogenesis. Catalyzes stereospecifically the conversion of dihydroxyacetone phosphate (DHAP) to D-glyceraldehyde-3-phosphate (G3P). The polypeptide is Triosephosphate isomerase (Buchnera aphidicola subsp. Acyrthosiphon pisum (strain APS) (Acyrthosiphon pisum symbiotic bacterium)).